Consider the following 202-residue polypeptide: Glycerol-3-phosphate acyltransferase (202 aa).

The next 5 membrane-spanning stretches (helical) occupy residues 6–26, 56–76, 82–102, 118–138, and 141–161; these read LTLG…AVLV, SAAL…YIAF, SVSL…PIFF, APIG…MVLI, and YSSL…WYLD.

The protein belongs to the PlsY family. As to quaternary structure, probably interacts with PlsX.

The protein localises to the cell inner membrane. It carries out the reaction an acyl phosphate + sn-glycerol 3-phosphate = a 1-acyl-sn-glycero-3-phosphate + phosphate. It functions in the pathway lipid metabolism; phospholipid metabolism. Functionally, catalyzes the transfer of an acyl group from acyl-phosphate (acyl-PO(4)) to glycerol-3-phosphate (G3P) to form lysophosphatidic acid (LPA). This enzyme utilizes acyl-phosphate as fatty acyl donor, but not acyl-CoA or acyl-ACP. The sequence is that of Glycerol-3-phosphate acyltransferase from Shewanella woodyi (strain ATCC 51908 / MS32).